A 500-amino-acid chain; its full sequence is NAD(P)H-quinone oxidoreductase chain 4, chloroplastic (500 aa).

The next 14 helical transmembrane spans lie at 3 to 23, 37 to 57, 84 to 104, 111 to 129, 134 to 154, 167 to 187, 208 to 228, 242 to 262, 272 to 292, 305 to 325, 330 to 350, 386 to 406, 416 to 436, and 462 to 482; these read FFPWLTIIVVLPIFAGSVIFF, ICICILELLLTTYAFCYHFQF, GLSIGPILLTGFITTLATLAA, SRLFHFLMLAMYSGQIGSF, LLLFFIMWEFELIPVYLLLSI, FILYTAGGSIFLLMGVLGVGL, ALEIIFYIGFFIAFAVKSPII, HYSTCMLLAGILLKMGAYGLI, AHSIFSPWLVIVGTIQIIYAA, IAYSSVSHMGFILIGIGSITD, GAILQIISHGFIGAALFFLAG, LALPGMSGFVAELIVFFGIIT, ILITFVMAIGMILTPIYSLSM, and LFVSISIFLPVIGIGMYPDFV.

The protein belongs to the complex I subunit 4 family.

The protein localises to the plastid. It is found in the chloroplast thylakoid membrane. It carries out the reaction a plastoquinone + NADH + (n+1) H(+)(in) = a plastoquinol + NAD(+) + n H(+)(out). The enzyme catalyses a plastoquinone + NADPH + (n+1) H(+)(in) = a plastoquinol + NADP(+) + n H(+)(out). In Panax ginseng (Korean ginseng), this protein is NAD(P)H-quinone oxidoreductase chain 4, chloroplastic.